Reading from the N-terminus, the 754-residue chain is Glutathione biosynthesis bifunctional protein GshAB (754 aa).

A glutamate--cysteine ligase region spans residues 1–333; that stretch reads MHINQLLQHA…KAQKLNDKIA (333 aa). One can recognise an ATP-grasp domain in the interval 489–752; the sequence is KKILRENGYP…LAKLFPEIST (264 aa). Position 516–574 (516–574) interacts with ATP; that stretch reads SQIKNKPIVVKPKTTNFGLGISIFETAASHNDYEKALDIAFIEDYSVLVEEFIPGTEYR. Residues Asp696, Glu717, and Asn719 each contribute to the Mg(2+) site. Mn(2+)-binding residues include Asp696, Glu717, and Asn719.

It in the N-terminal section; belongs to the glutamate--cysteine ligase type 1 family. Type 2 subfamily. Monomer. Mg(2+) is required as a cofactor. The cofactor is Mn(2+).

It catalyses the reaction L-cysteine + L-glutamate + ATP = gamma-L-glutamyl-L-cysteine + ADP + phosphate + H(+). It carries out the reaction gamma-L-glutamyl-L-cysteine + glycine + ATP = glutathione + ADP + phosphate + H(+). It participates in sulfur metabolism; glutathione biosynthesis; glutathione from L-cysteine and L-glutamate: step 1/2. It functions in the pathway sulfur metabolism; glutathione biosynthesis; glutathione from L-cysteine and L-glutamate: step 2/2. Synthesizes glutathione from L-glutamate and L-cysteine via gamma-L-glutamyl-L-cysteine. This Streptococcus mutans serotype c (strain ATCC 700610 / UA159) protein is Glutathione biosynthesis bifunctional protein GshAB.